The chain runs to 935 residues: Protocadherin gamma-A11 (935 aa).

A signal peptide spans 1–29 (MANRLQRGDRSRLLLLLCIFLGTLRGFRA). Cadherin domains lie at 30–134 (RQIR…APSF), 135–243 (QEDE…IPMF), 244–348 (TQSV…APEI), 349–453 (TITS…PPVF), 454–563 (PHSS…APEI), and 571–677 (DGST…ADLG). The Extracellular segment spans residues 30–693 (RQIRYSVPEE…NSEASDLSLY (664 aa)). A glycan (N-linked (GlcNAc...) asparagine) is linked at asparagine 48. Residues asparagine 255, asparagine 266, asparagine 420, and asparagine 546 are each glycosylated (N-linked (GlcNAc...) asparagine). A helical transmembrane segment spans residues 694 to 714 (LVVAVAAVSCIFLVFVIVLLA). The Cytoplasmic portion of the chain corresponds to 715-935 (LRLWRWHKSR…KKKSGKKEKK (221 aa)). 2 disordered regions span residues 805–844 (CDPT…WPNN) and 905–935 (ATLT…KEKK). Positions 807–844 (PTSNQQAPPNTDWRFSQAQRPGTSGSQNGDDTGTWPNN) are enriched in polar residues. A compositionally biased stretch (basic residues) spans 925–935 (NKKKSGKKEKK).

The protein localises to the cell membrane. Potential calcium-dependent cell-adhesion protein. May be involved in the establishment and maintenance of specific neuronal connections in the brain. This Pan troglodytes (Chimpanzee) protein is Protocadherin gamma-A11 (PCDHGA11).